A 170-amino-acid polypeptide reads, in one-letter code: Small ribosomal subunit protein uS3mA (170 aa).

The N-terminal 30 residues, M1–C30, are a transit peptide targeting the mitochondrion.

The protein belongs to the universal ribosomal protein uS3 family. Component of the mitochondrial ribosome small subunit (28S) which comprises a 12S rRNA and about 30 distinct proteins.

It localises to the mitochondrion. The polypeptide is Small ribosomal subunit protein uS3mA (mrps24-a) (Xenopus laevis (African clawed frog)).